An 846-amino-acid polypeptide reads, in one-letter code: Aminopeptidase N (846 aa).

Residues Glu-120 and 252-256 (GAMEN) each bind substrate. His-288 contacts Zn(2+). The active-site Proton acceptor is Glu-289. Residues His-292 and Glu-311 each contribute to the Zn(2+) site.

This sequence belongs to the peptidase M1 family. Monomer. The cofactor is Zn(2+).

Its subcellular location is the cytoplasm. It catalyses the reaction Release of an N-terminal amino acid, Xaa-|-Yaa- from a peptide, amide or arylamide. Xaa is preferably Ala, but may be most amino acids including Pro (slow action). When a terminal hydrophobic residue is followed by a prolyl residue, the two may be released as an intact Xaa-Pro dipeptide.. Aminopeptidase with broad substrate specificity to several peptides. It has more affinity for oligopeptides than for dipeptides. It plays an essential role in the metabolism, it may be involved in nitrogen supply or protein turnover. This is Aminopeptidase N (pepN) from Lactococcus lactis subsp. cremoris (Streptococcus cremoris).